The chain runs to 107 residues: Anti-adapter protein IraM (107 aa).

It belongs to the IraM/RssC family.

It localises to the cytoplasm. Functionally, inhibits RpoS proteolysis by regulating RssB activity, thereby increasing the stability of the sigma stress factor RpoS during magnesium starvation. This Shigella dysenteriae serotype 1 (strain Sd197) protein is Anti-adapter protein IraM.